The sequence spans 330 residues: DNA-directed RNA polymerase subunit alpha (330 aa).

Residues 1–237 (MYTEINEMLT…RQLHAFVDMK (237 aa)) form an alpha N-terminal domain (alpha-NTD) region. Residues 251–330 (FDPVLLRSVD…ENWPPASLGE (80 aa)) form an alpha C-terminal domain (alpha-CTD) region.

Belongs to the RNA polymerase alpha chain family. As to quaternary structure, homodimer. The RNAP catalytic core consists of 2 alpha, 1 beta, 1 beta' and 1 omega subunit. When a sigma factor is associated with the core the holoenzyme is formed, which can initiate transcription.

The catalysed reaction is RNA(n) + a ribonucleoside 5'-triphosphate = RNA(n+1) + diphosphate. Functionally, DNA-dependent RNA polymerase catalyzes the transcription of DNA into RNA using the four ribonucleoside triphosphates as substrates. This Legionella pneumophila (strain Corby) protein is DNA-directed RNA polymerase subunit alpha.